The primary structure comprises 341 residues: Phosphoribosylformylglycinamidine cyclo-ligase (341 aa).

It belongs to the AIR synthase family.

It is found in the cytoplasm. It carries out the reaction 2-formamido-N(1)-(5-O-phospho-beta-D-ribosyl)acetamidine + ATP = 5-amino-1-(5-phospho-beta-D-ribosyl)imidazole + ADP + phosphate + H(+). It participates in purine metabolism; IMP biosynthesis via de novo pathway; 5-amino-1-(5-phospho-D-ribosyl)imidazole from N(2)-formyl-N(1)-(5-phospho-D-ribosyl)glycinamide: step 2/2. The protein is Phosphoribosylformylglycinamidine cyclo-ligase of Synechocystis sp. (strain ATCC 27184 / PCC 6803 / Kazusa).